A 475-amino-acid chain; its full sequence is ATP synthase subunit beta (475 aa).

G152–T159 serves as a coordination point for ATP.

It belongs to the ATPase alpha/beta chains family. As to quaternary structure, F-type ATPases have 2 components, CF(1) - the catalytic core - and CF(0) - the membrane proton channel. CF(1) has five subunits: alpha(3), beta(3), gamma(1), delta(1), epsilon(1). CF(0) has four main subunits: a(1), b(1), b'(1) and c(9-12).

The protein resides in the cell inner membrane. It catalyses the reaction ATP + H2O + 4 H(+)(in) = ADP + phosphate + 5 H(+)(out). Produces ATP from ADP in the presence of a proton gradient across the membrane. The catalytic sites are hosted primarily by the beta subunits. The polypeptide is ATP synthase subunit beta (Cereibacter sphaeroides (strain ATCC 17025 / ATH 2.4.3) (Rhodobacter sphaeroides)).